The following is a 183-amino-acid chain: Putative 3-methyladenine DNA glycosylase (183 aa).

It belongs to the DNA glycosylase MPG family.

This is Putative 3-methyladenine DNA glycosylase from Legionella pneumophila (strain Lens).